Here is a 1197-residue protein sequence, read N- to C-terminus: MNFEGLDPSLAEYAPTLHPALDPVLDPHLNPSLLQNVELDPEGVPLEGIAVPESVHIVEGMYSELHTAVSEVGVPVSVSHFDLHEEMLWVGNHGGHATSFFGPTLERYSSFQVNSSDDIRQIQSLESGVLFLTKTNLKCMSRGGLIIFDYLMDEAEDMHSLLLTDSSTLLVGGLQNHVIEIDLNTVQETQKYTVEVPGITIMRQSNRFFFCGHTSGKVSLRDLRTFVVEHEFDAYSGSLSDFDVHGNLLVTCGFSSRMNGLACDRFLKVYDLRMMRATTPLQVHIDPFFLRFIPTYTSRLAIISQTGQCQFCEPTGLANPADIFHVNTVGPLIMTFDVSASKQALAFGDSEGCVHLWADSPEVTFNTYSRETDFALPCIVDTLPHLDWNQDLVPLSLIPVPLTSETLLSDWPAANSAPAPRRAPPVDPEILRTMKKVGFIGYAPNPRTKLRNQIPYRLKEADNEFDSFSQVPESPIGREEEPHLYMVAKKYRKVTIKYSKLGLEDFDFKHYNKTLFAGLEPHIPNAYCNCMIQVLYFLEPVRCLVQNHLCQKEFCLGCELGLLFHMLDLSRGDPCQGSNFLRAFRTIPEASALGLILADSDEATGKVNLGRLIQSWNRFILTQLHQETQEQEGPQAYRGAGSSTFGSSGDSVIGQLFSCEVENCSMCRCGKETVRVSSTLLFTLSYPESAEKPVKDYEFAQILKRSICLEQNTQAWCENCEKYQPTVQTRNIRCLPDVLVINCEVNSSKEADFWKTQAEYAFQRALMKRGGFEITKGKEISLGDWKELGNPEVGHSYPSVEELKNIWIPHAIKMRLTKNKELDVCNWSESDELSPNDDPESVYVYDLMATVVHILDSRTGGSLVGHIKVGETYHQRKEGVTHQQWYLFNDFLIEPVDKCEAVQFDMSWKVPAILYYARRNLNSKYNLVIKNPIEASVLLAEASLARKQRKCHATFIPLMLSEMPQAGDLVGLDAEFVTLNEEEAELRSDGTKSTIKPSQMSVARITCVRGQGPNEGVPFIDDYISTQEQVVDYLTQYSGIKPGDLDAKISSKHLTTLKSTYLKLRFLIDVGVKFVGHGLQKDFRVINLMVPKDQVIDTVYLFHIPRKRMISLRFLAWYFLDLKIQGETHDSIEDARTALQLYRKYLELSQGGSEPDDFRKVLKALYEKGRKLDWKVPEPDSQSSPKHGAVFPPVLAL.

4 WD repeats span residues 153-193, 195-231, 244-280, and 328-367; these read DEAE…QKYT, EVPGITIMRQSNRFFFCGHTSGKVSLRDLRTFVVEHE, VHGNLLVTCGFSSRMNGLACDRFLKVYDLRMMRATTP, and TVGPLIMTFDVSASKQALAFGDSEGCVHLWADSPEVTFNT. A linker region spans residues 368–485; that stretch reads YSRETDFALP…IGREEEPHLY (118 aa). The region spanning 486-919 is the USP domain; it reads MVAKKYRKVT…VPAILYYARR (434 aa). Residues 970–1142 form the Exonuclease domain; it reads VGLDAEFVTL…EDARTALQLY (173 aa). A divalent metal cation-binding residues include D973, E975, D1082, and D1134. Residues 1176 to 1197 are disordered; it reads VPEPDSQSSPKHGAVFPPVLAL.

The protein belongs to the peptidase C19 family. PAN2 subfamily. As to quaternary structure, forms a heterotrimer with an asymmetric homodimer of the regulatory subunit PAN3 to form the poly(A)-nuclease (PAN) deadenylation complex. A divalent metal cation is required as a cofactor.

It localises to the cytoplasm. It is found in the P-body. The protein resides in the nucleus. It carries out the reaction Exonucleolytic cleavage of poly(A) to 5'-AMP.. With respect to regulation, positively regulated by the regulatory subunit PAN3. Functionally, catalytic subunit of the poly(A)-nuclease (PAN) deadenylation complex, one of two cytoplasmic mRNA deadenylases involved in general and miRNA-mediated mRNA turnover. PAN specifically shortens poly(A) tails of RNA and the activity is stimulated by poly(A)-binding protein (PABP). PAN deadenylation is followed by rapid degradation of the shortened mRNA tails by the CCR4-NOT complex. Deadenylated mRNAs are then degraded by two alternative mechanisms, namely exosome-mediated 3'-5' exonucleolytic degradation, or deadenylation-dependent mRNA decaping and subsequent 5'-3' exonucleolytic degradation by XRN1. In Gallus gallus (Chicken), this protein is PAN2-PAN3 deadenylation complex catalytic subunit PAN2.